A 94-amino-acid polypeptide reads, in one-letter code: Integration host factor subunit beta (94 aa).

The protein belongs to the bacterial histone-like protein family. In terms of assembly, heterodimer of an alpha and a beta chain.

In terms of biological role, this protein is one of the two subunits of integration host factor, a specific DNA-binding protein that functions in genetic recombination as well as in transcriptional and translational control. This is Integration host factor subunit beta from Mannheimia succiniciproducens (strain KCTC 0769BP / MBEL55E).